The sequence spans 475 residues: Methyltransferase-like protein 25B (475 aa).

The stretch at 185 to 210 (NKRLVARAQRLDQELLQALDKMEKRH) forms a coiled coil. Residues 406 to 426 (VVAFFSLALLLAPLVETLILL) form a helical membrane-spanning segment.

The protein belongs to the METTL25 family.

It localises to the membrane. This Rattus norvegicus (Rat) protein is Methyltransferase-like protein 25B.